Here is a 297-residue protein sequence, read N- to C-terminus: MCAQHVADTSEVKWQKVLYERQPFPDNYVDQRFLEELRKNIYARKYQYWAVVFESSVVIQQLCSVCVFVVIWWYMDEGLLAPQWLFGTGLASSLVGYVLFDLIDGGDGRKKSGRTRWADLKSTLVFITFTYGFSPVLKTLTESVSTDTIYAMSVFMLLGHLIFFDYGANAAIVSSTLSLNMAIFASVCLASRLPRSLHAFIMVTFAIQIFALWPMLQKKLKAYTPRSYVGVTLLFAFSAFGGLLSISGVGAILFALLLFSISCLCPYYLIHLQLFKENIHGPWDEAEIKEDLSRFLS.

4 helical membrane passes run 67-87 (VFVVIWWYMDEGLLAPQWLFG), 88-108 (TGLASSLVGYVLFDLIDGGDG), 153-173 (SVFMLLGHLIFFDYGANAAIV), and 239-259 (AFGGLLSISGVGAILFALLLF).

It belongs to the PIGC family. In terms of assembly, component of the glycosylphosphatidylinositol-N-acetylglucosaminyltransferase (GPI-GnT) complex composed at least by PIGA, PIGC, PIGH, PIGP, PIGQ, PIGY and DPM2. Interacts with PIGQ. Interacts with the heterodimer PIGA:PIGH.

The protein resides in the endoplasmic reticulum membrane. It functions in the pathway glycolipid biosynthesis; glycosylphosphatidylinositol-anchor biosynthesis. In terms of biological role, part of the glycosylphosphatidylinositol-N-acetylglucosaminyltransferase (GPI-GnT) complex that catalyzes the transfer of N-acetylglucosamine from UDP-N-acetylglucosamine to phosphatidylinositol and participates in the first step of GPI biosynthesis. This chain is Phosphatidylinositol N-acetylglucosaminyltransferase subunit C, found in Rattus norvegicus (Rat).